Reading from the N-terminus, the 267-residue chain is Hydroxynaphthalene reductase-like protein Arp2 (267 aa).

Ile25, Asn45, Asp71, and Asn98 together coordinate NADP(+). Catalysis depends on proton donor residues Ser147 and Ser148. Residues Tyr162, Lys166, Val195, and Thr197 each contribute to the NADP(+) site. The active-site Proton acceptor is the Tyr162. The active-site Lowers pKa of active site Tyr is Lys166.

Belongs to the short-chain dehydrogenases/reductases (SDR) family.

In terms of biological role, hydroxynaphthalene reductase-like protein; part of the Pks2 gene cluster that mediates the formation of infectious structures (appressoria), enabling these fungi to kill insects faster. The product of the Pks2 gene cluster is different from the one of Pks1 and has still not been identified. This chain is Hydroxynaphthalene reductase-like protein Arp2, found in Metarhizium anisopliae (strain ARSEF 549).